A 593-amino-acid chain; its full sequence is Ribonuclease Y (593 aa).

The helical transmembrane segment at 6–26 (ILLMYLIVGLLTALTVLIFVF) threads the bilayer. The KH domain maps to 218–278 (DPIKVKKVTD…IKLEVAYNAL (61 aa)). The HD domain occupies 354-464 (VLTHSIEAAQ…TKIADFLSAA (111 aa)).

Belongs to the RNase Y family.

Its subcellular location is the cell membrane. Functionally, endoribonuclease that initiates mRNA decay. The protein is Ribonuclease Y of Mycoplasmoides gallisepticum (strain R(low / passage 15 / clone 2)) (Mycoplasma gallisepticum).